The chain runs to 130 residues: Glycoprotein hormone beta-5 (130 aa).

Residues 1–24 (MKLAFLFLGPMALLLLAGYGCVLG) form the signal peptide. 5 cysteine pairs are disulfide-bonded: Cys36–Cys84, Cys50–Cys99, Cys60–Cys115, Cys64–Cys117, and Cys120–Cys127. Asn87 carries N-linked (GlcNAc...) asparagine glycosylation.

Belongs to the glycoprotein hormones subunit beta family. Heterodimer with GPHA2; this heterodimer interacts with thyroid-stimulating hormone receptor (TSHR), and hence stimulates cAMP production. In terms of processing, N-glycosylated. In terms of tissue distribution, highly expressed in brain and at low levels in pituitary. Also found in retina, testis and skin but not in pancreas, parotid, kidney, stomach, liver, colon, small intestine, thyroid, brain or adrenal gland. In pituitary, colocalizes with ACTH, suggesting that it is located in corticotrophs.

It is found in the secreted. Functionally, functions as a heterodimeric glycoprotein hormone with GPHA2 able to bind and activate the thyroid-stimulating hormone receptor (TSHR), leading to increased cAMP production. Plays a central role in controlling thyroid cell metabolism. This Homo sapiens (Human) protein is Glycoprotein hormone beta-5 (GPHB5).